A 240-amino-acid polypeptide reads, in one-letter code: DNA repair protein RecO (240 aa).

Belongs to the RecO family.

Functionally, involved in DNA repair and RecF pathway recombination. This Xanthomonas euvesicatoria pv. vesicatoria (strain 85-10) (Xanthomonas campestris pv. vesicatoria) protein is DNA repair protein RecO.